The chain runs to 241 residues: Large ribosomal subunit protein uL3 (241 aa).

Disordered stretches follow at residues 139–166 (VSHR…PGHM) and 209–241 (KKPL…KEGA). Residue Gln151 is modified to N5-methylglutamine.

Belongs to the universal ribosomal protein uL3 family. As to quaternary structure, part of the 50S ribosomal subunit. Forms a cluster with proteins L14 and L19. Methylated by PrmB.

One of the primary rRNA binding proteins, it binds directly near the 3'-end of the 23S rRNA, where it nucleates assembly of the 50S subunit. The sequence is that of Large ribosomal subunit protein uL3 from Nitrobacter hamburgensis (strain DSM 10229 / NCIMB 13809 / X14).